A 142-amino-acid chain; its full sequence is uncharacterized protein (142 aa).

This is an uncharacterized protein from Acanthamoeba polyphaga (Amoeba).